The primary structure comprises 144 residues: Dynein light chain Tctex-type protein 2B (144 aa).

The protein belongs to the dynein light chain Tctex-type family. Light chain of the cytoplasmic dynein complex 2, a multisubunit complex composed at least of eleven different proteins. The cytoplasmic dynein 2 complex consists of two catalytic heavy chains (HCs) and a number of non-catalytic subunits presented by intermediate chains (ICs), light intermediate chains (LICs) and light chains (LCs). Among them, a heavy chain (DYNC2H1), two intermediate chains (DYNC2I2 and DYNC2I1), a light intermediate chain (DYNC2LI1), and a light chain (DYNLT2B) are unique to the dynein-2 complex, but a subset of the light chains are also shared by dynein-1 and dynein-2 complexes. The dimer DYNLT2B-DYNLT1/DYNLT3 interacts with DYNC2I1; this interaction is crucial for retrograde trafficking of ciliary proteins.

The protein localises to the dynein axonemal particle. Its function is as follows. Acts as one of several non-catalytic accessory components of the cytoplasmic dynein 2 complex (dynein-2 complex), a motor protein complex that drives the movement of cargos along microtubules within cilia and flagella in concert with the intraflagellar transport (IFT) system. Required for proper retrograde ciliary transport. The sequence is that of Dynein light chain Tctex-type protein 2B (Dynlt2b) from Mus musculus (Mouse).